The sequence spans 269 residues: Formamidopyrimidine-DNA glycosylase (269 aa).

Pro-2 acts as the Schiff-base intermediate with DNA in catalysis. The Proton donor role is filled by Glu-3. Lys-57 serves as the catalytic Proton donor; for beta-elimination activity. Residues His-90, Arg-109, and Lys-150 each coordinate DNA. The FPG-type zinc-finger motif lies at Gln-235–Asn-269. The Proton donor; for delta-elimination activity role is filled by Arg-259.

The protein belongs to the FPG family. Monomer. It depends on Zn(2+) as a cofactor.

The catalysed reaction is Hydrolysis of DNA containing ring-opened 7-methylguanine residues, releasing 2,6-diamino-4-hydroxy-5-(N-methyl)formamidopyrimidine.. It carries out the reaction 2'-deoxyribonucleotide-(2'-deoxyribose 5'-phosphate)-2'-deoxyribonucleotide-DNA = a 3'-end 2'-deoxyribonucleotide-(2,3-dehydro-2,3-deoxyribose 5'-phosphate)-DNA + a 5'-end 5'-phospho-2'-deoxyribonucleoside-DNA + H(+). Its function is as follows. Involved in base excision repair of DNA damaged by oxidation or by mutagenic agents. Acts as a DNA glycosylase that recognizes and removes damaged bases. Has a preference for oxidized purines, such as 7,8-dihydro-8-oxoguanine (8-oxoG). Has AP (apurinic/apyrimidinic) lyase activity and introduces nicks in the DNA strand. Cleaves the DNA backbone by beta-delta elimination to generate a single-strand break at the site of the removed base with both 3'- and 5'-phosphates. This chain is Formamidopyrimidine-DNA glycosylase, found in Baumannia cicadellinicola subsp. Homalodisca coagulata.